Here is an 86-residue protein sequence, read N- to C-terminus: Small ribosomal subunit protein bS20 (86 aa).

This sequence belongs to the bacterial ribosomal protein bS20 family.

Functionally, binds directly to 16S ribosomal RNA. The polypeptide is Small ribosomal subunit protein bS20 (Rhodococcus jostii (strain RHA1)).